We begin with the raw amino-acid sequence, 198 residues long: Beta-crystallin A1 (198 aa).

The interval 1–13 (MAQINPLPVPLGP) is N-terminal arm. 2 consecutive Beta/gamma crystallin 'Greek key' domains span residues 14–53 (WKITVYDQENFQGKRMEFTSSCANIMECGFDNIRSLKVEC) and 54–100 (GGWI…RPIC). The tract at residues 101–106 (SANHKE) is connecting peptide. Beta/gamma crystallin 'Greek key' domains lie at 107–148 (SKLV…KVQC) and 149–197 (GSWV…RRIQ).

Belongs to the beta/gamma-crystallin family. Homo/heterodimer, or complexes of higher-order. The structure of beta-crystallin oligomers seems to be stabilized through interactions between the N-terminal arms.

Crystallins are the dominant structural components of the vertebrate eye lens. In Rana temporaria (European common frog), this protein is Beta-crystallin A1.